The sequence spans 123 residues: NADH dehydrogenase [ubiquinone] 1 beta subcomplex subunit 7 (123 aa).

The segment at 1–32 is disordered; it reads MGTKLSVSLEGASTPETAPRVDRPPTFDPQYG. One can recognise a CHCH domain in the interval 59–102; it reads RDYCAHHLISLMKCQTQNAPFAGHACDGERGAWDKCEYDDHIMR. Short sequence motifs (cx9C motif) lie at residues 62–72 and 84–94; these read CAHHLISLMKC and CDGERGAWDKC. Cystine bridges form between Cys62–Cys94 and Cys72–Cys84.

The protein belongs to the complex I NDUFB7 subunit family. Complex I is composed of 45 different subunits.

The protein resides in the mitochondrion. It is found in the mitochondrion inner membrane. Its subcellular location is the mitochondrion intermembrane space. Accessory subunit of the mitochondrial membrane respiratory chain NADH dehydrogenase (Complex I), that is believed not to be involved in catalysis. Complex I functions in the transfer of electrons from NADH to the respiratory chain. The immediate electron acceptor for the enzyme is believed to be ubiquinone. The sequence is that of NADH dehydrogenase [ubiquinone] 1 beta subcomplex subunit 7 from Caenorhabditis elegans.